Here is a 420-residue protein sequence, read N- to C-terminus: Dihydrolipoyllysine-residue succinyltransferase component of 2-oxoglutarate dehydrogenase complex (420 aa).

Residues 3-78 (KINILVPDLP…ISQQTLGEIN (76 aa)) enclose the Lipoyl-binding domain. Lys-44 is modified (N6-lipoyllysine). Active-site residues include His-391 and Asp-395.

The protein belongs to the 2-oxoacid dehydrogenase family. As to quaternary structure, forms a 24-polypeptide structural core with octahedral symmetry. Part of the 2-oxoglutarate dehydrogenase (OGDH) complex composed of E1 (2-oxoglutarate dehydrogenase), E2 (dihydrolipoamide succinyltransferase) and E3 (dihydrolipoamide dehydrogenase); the complex contains multiple copies of the three enzymatic components (E1, E2 and E3). Requires (R)-lipoate as cofactor.

It carries out the reaction N(6)-[(R)-dihydrolipoyl]-L-lysyl-[protein] + succinyl-CoA = N(6)-[(R)-S(8)-succinyldihydrolipoyl]-L-lysyl-[protein] + CoA. The protein operates within amino-acid degradation; L-lysine degradation via saccharopine pathway; glutaryl-CoA from L-lysine: step 6/6. Functionally, E2 component of the 2-oxoglutarate dehydrogenase (OGDH) complex which catalyzes the second step in the conversion of 2-oxoglutarate to succinyl-CoA and CO(2). This chain is Dihydrolipoyllysine-residue succinyltransferase component of 2-oxoglutarate dehydrogenase complex (sucB), found in Buchnera aphidicola subsp. Acyrthosiphon pisum (strain APS) (Acyrthosiphon pisum symbiotic bacterium).